The sequence spans 384 residues: Cell division protein FtsZ (384 aa).

Residues 20 to 24, 107 to 109, glutamate 138, arginine 142, and asparagine 186 each bind GTP; these read GGGSN and GTG.

It belongs to the FtsZ family. As to quaternary structure, homodimer. Polymerizes to form a dynamic ring structure in a strictly GTP-dependent manner. Interacts directly with several other division proteins.

The protein resides in the cytoplasm. Essential cell division protein that forms a contractile ring structure (Z ring) at the future cell division site. The regulation of the ring assembly controls the timing and the location of cell division. One of the functions of the FtsZ ring is to recruit other cell division proteins to the septum to produce a new cell wall between the dividing cells. Binds GTP and shows GTPase activity. This chain is Cell division protein FtsZ, found in Buchnera aphidicola subsp. Acyrthosiphon pisum (strain APS) (Acyrthosiphon pisum symbiotic bacterium).